Consider the following 341-residue polypeptide: DNA fragmentation factor subunit beta (341 aa).

The 77-residue stretch at 7–83 (KPKTFKLRSL…LLTAGQTWQG (77 aa)) folds into the CIDE-N domain.

Heterodimer of DFFA and DFFB. Interacts with H1-1.

The protein resides in the cytoplasm. Its subcellular location is the nucleus. Inhibited by DFFA (DFF45). Interacts with HIST1H1A. Nuclease that induces DNA fragmentation and chromatin condensation during apoptosis. Degrades naked DNA and induces apoptotic morphology. The protein is DNA fragmentation factor subunit beta (DFFB) of Bos taurus (Bovine).